A 1386-amino-acid chain; its full sequence is Roundabout homolog 3 (1386 aa).

The N-terminal stretch at 1 to 20 is a signal peptide; that stretch reads MLRYLLKTLLQMNLFADSLA. The Extracellular portion of the chain corresponds to 21–891; that stretch reads GDISNSSELL…VRLARVLREP (871 aa). 4 N-linked (GlcNAc...) asparagine glycosylation sites follow: asparagine 25, asparagine 34, asparagine 41, and asparagine 53. Ig-like C2-type domains are found at residues 64–160, 166–253, 258–342, 347–440, and 450–531; these read PRIV…ASLE, DDFR…AEVM, PSFL…GSLS, PQLV…ALLE, and PPVI…GEAT. A disulfide bridge links cysteine 85 with cysteine 143. Asparagine 156 carries an N-linked (GlcNAc...) asparagine glycan. 3 cysteine pairs are disulfide-bonded: cysteine 187–cysteine 236, cysteine 279–cysteine 326, and cysteine 368–cysteine 424. N-linked (GlcNAc...) asparagine glycans are attached at residues asparagine 410, asparagine 459, and asparagine 503. Cysteines 472 and 521 form a disulfide. Disordered stretches follow at residues 541-563 and 639-662; these read DWGV…SQPV and EPSP…EDPW. Positions 546–559 are enriched in pro residues; the sequence is PDPPTEPSSPPGAP. Fibronectin type-III domains are found at residues 558–652, 671–766, and 771–869; these read APSQ…TQDS, VAVR…IPEE, and PPQG…SPPD. N-linked (GlcNAc...) asparagine glycosylation is found at asparagine 784, asparagine 813, and asparagine 820. The chain crosses the membrane as a helical span at residues 892 to 912; the sequence is AFLAGSGAACGALLLGLCAAL. The Cytoplasmic portion of the chain corresponds to 913-1386; sequence YWRRKQRKEL…PGQKRREEPR (474 aa). Disordered stretches follow at residues 965-989, 1028-1310, and 1327-1386; these read SWPH…NPDP, ELQT…AVPL, and SRPS…EEPR. The segment covering 1067 to 1083 has biased composition (low complexity); it reads VKLLGKPVQMPSLNWPE. Acidic residues predominate over residues 1099–1112; the sequence is GPEEELEGSSEPEE. Residues 1158-1169 are compositionally biased toward pro residues; that stretch reads PSPPDPPQPPTD. Low complexity-rich tracts occupy residues 1178-1191 and 1202-1229; these read RRVP…LSVS and PAGL…SAPG. At serine 1263 the chain carries Phosphoserine. Over residues 1294-1304 the composition is skewed to basic and acidic residues; the sequence is LERERSGERKA. Residues 1333 to 1344 show a composition bias toward polar residues; sequence SRGQGTSTCSTA. Residues 1345-1361 show a composition bias toward low complexity; the sequence is GSNSSRGSSSSRGSRGP.

Belongs to the immunoglobulin superfamily. ROBO family. Monomer. Interacts (via Fibronectin type-III 1 domain) with NELL2 (via the EGF domains) with a 3:3 stoichiometry; this interaction promotes oligomerization of ROBO3 resulting in the repulsion of commissural axons in the midline.

It is found in the membrane. Receptor involved in axon guidance during development. Acts as a multifunctional regulator of pathfinding that simultaneously mediates NELL2 repulsion, inhibits SLIT repulsion, and facilitates Netrin-1/NTN1 attraction. In spinal cord development plays a role in guiding commissural axons probably by preventing premature sensitivity to Slit proteins thus inhibiting Slit signaling through ROBO1/ROBO2. Binding OF NELL2 to the receptor ROBO3 promotes oligomerization of ROBO3, resulting in the repulsion of commissural axons in the midline. ROBO3 also indirectly boosts axon attraction to NTN1 without interacting with NTN1 itself. The sequence is that of Roundabout homolog 3 from Homo sapiens (Human).